The chain runs to 422 residues: Enolase (422 aa).

Gln-161 is a binding site for (2R)-2-phosphoglycerate. The Proton donor role is filled by Glu-203. 3 residues coordinate Mg(2+): Asp-240, Glu-283, and Asp-310. 4 residues coordinate (2R)-2-phosphoglycerate: Lys-335, Arg-364, Ser-365, and Lys-386. The Proton acceptor role is filled by Lys-335.

This sequence belongs to the enolase family. Mg(2+) serves as cofactor.

Its subcellular location is the cytoplasm. The protein localises to the secreted. The protein resides in the cell surface. It catalyses the reaction (2R)-2-phosphoglycerate = phosphoenolpyruvate + H2O. The protein operates within carbohydrate degradation; glycolysis; pyruvate from D-glyceraldehyde 3-phosphate: step 4/5. In terms of biological role, catalyzes the reversible conversion of 2-phosphoglycerate (2-PG) into phosphoenolpyruvate (PEP). It is essential for the degradation of carbohydrates via glycolysis. This is Enolase from Deinococcus deserti (strain DSM 17065 / CIP 109153 / LMG 22923 / VCD115).